The primary structure comprises 126 residues: Plastocyanin (126 aa).

The first 28 residues, 1-28 (MSKKFLTILAGLLLVVSSFFLSVSPAAA), serve as a signal peptide directing secretion. One can recognise a Plastocyanin-like domain in the interval 29-126 (ANATVKMGSD…AGMVGKVVVE (98 aa)). His67, Cys111, His114, and Met119 together coordinate Cu cation.

Belongs to the plastocyanin family. It depends on Cu(2+) as a cofactor.

Its subcellular location is the cellular thylakoid membrane. In terms of biological role, participates in electron transfer between P700 and the cytochrome b6-f complex in photosystem I. This Synechocystis sp. (strain ATCC 27184 / PCC 6803 / Kazusa) protein is Plastocyanin (petE).